The following is a 490-amino-acid chain: Cytochrome P450 71A22 (490 aa).

The helical transmembrane segment at 2 to 22 (ESMIRIILLSLIIFITILFFI) threads the bilayer. Cysteine 432 is a heme binding site.

The protein belongs to the cytochrome P450 family. The cofactor is heme.

The protein resides in the membrane. This chain is Cytochrome P450 71A22 (CYP71A22), found in Arabidopsis thaliana (Mouse-ear cress).